A 266-amino-acid polypeptide reads, in one-letter code: Apoptosis regulator ced-9 (266 aa).

Residues 1 to 58 (MVDSMDMANSSQNTFRRRTMATSEMREFLSTKDAEPNNFGMQTIPESPTPSTPTRRMS) form a disordered region. Residues 24-35 (EMREFLSTKDAE) show a composition bias toward basic and acidic residues. The short motif at 75–94 (IQGFVVDYFTYRIAQNGLDW) is the BH4 element. Residues 156–174 (NTPCPMSYGRLIGLISFGG) carry the BH1 motif. The BH2 motif lies at 208 to 223 (SWKEHNRSWADFMKLG).

Belongs to the Bcl-2 family. Interacts with asymmetric homodimer ced-4; the interaction sequesters ced-4. Interacts with egl-1; the interaction results in ced-4 release. Interacts with dre-1; the interaction inhibits ced-9 activity, either directly or indirectly. Interacts with dct-1. May form a complex composed of ced-9, ced-4 and mac-1.

The protein resides in the perikaryon. It is found in the synapse. The protein localises to the endomembrane system. It localises to the mitochondrion membrane. Functionally, plays a major role in programmed cell death (PCD, apoptosis). egl-1 binds to and directly inhibits the activity of ced-9, releasing the cell death activator ced-4 from a ced-9/ced-4 containing protein complex and allowing ced-4 to activate the cell-killing caspase ced-3. During larval development, required for the elimination of transient presynaptic components downstream of egl-1 and upstream of ced-4 and ced-3 apoptotic pathway. This chain is Apoptosis regulator ced-9 (ced-9), found in Caenorhabditis briggsae.